The chain runs to 490 residues: Phosphoglucosamine mutase (490 aa).

The Phosphoserine intermediate role is filled by serine 139. Mg(2+) contacts are provided by serine 139, aspartate 279, aspartate 281, and aspartate 283. A Phosphoserine modification is found at serine 139.

It belongs to the phosphohexose mutase family. Requires Mg(2+) as cofactor. Post-translationally, activated by phosphorylation.

The enzyme catalyses alpha-D-glucosamine 1-phosphate = D-glucosamine 6-phosphate. Catalyzes the conversion of glucosamine-6-phosphate to glucosamine-1-phosphate. This is Phosphoglucosamine mutase from Trichormus variabilis (strain ATCC 29413 / PCC 7937) (Anabaena variabilis).